Here is an 817-residue protein sequence, read N- to C-terminus: Phospholipase D alpha 2 (817 aa).

The C2 domain maps to 1-130 (MAHLLLHGTL…LSGEAIERRL (130 aa)). Asp192 lines the Ca(2+) pocket. Residues 333–372 (YMITHHQKTVIVDHDMPVPRGGGSRRIVSFVGGLDLCDGR) enclose the PLD phosphodiesterase 1 domain. Catalysis depends on residues His338, Lys340, and Asp345. His338 lines the a 1,2-diacyl-sn-glycero-3-phosphate pocket. His378 and His412 together coordinate Ca(2+). Residues Gln529 and His668 each coordinate a 1,2-diacyl-sn-glycero-3-phosphate. A PLD phosphodiesterase 2 domain is found at 663 to 690 (FMIYVHSKMMIVDDEYIIVGSANINQRS). Residues His668, Lys670, and Asp675 contribute to the active site. Glu730 lines the Ca(2+) pocket.

The protein belongs to the phospholipase D family. C2-PLD subfamily. Requires Ca(2+) as cofactor.

The enzyme catalyses a 1,2-diacyl-sn-glycero-3-phosphocholine + H2O = a 1,2-diacyl-sn-glycero-3-phosphate + choline + H(+). Hydrolyzes glycerol-phospholipids at the terminal phosphodiesteric bond. Plays an important role in various cellular processes. The chain is Phospholipase D alpha 2 (PLD2) from Oryza sativa subsp. japonica (Rice).